Consider the following 70-residue polypeptide: Cold shock-like protein CspI (70 aa).

The CSD domain maps to 7 to 67; the sequence is GLVKWFNPEK…GPKGPAAVHV (61 aa).

The protein localises to the cytoplasm. The protein is Cold shock-like protein CspI (cspI) of Escherichia coli O6:H1 (strain CFT073 / ATCC 700928 / UPEC).